A 273-amino-acid polypeptide reads, in one-letter code: Cilia- and flagella-associated protein 298-B (273 aa).

It belongs to the CFAP298 family.

The protein localises to the cytoplasm. Its subcellular location is the cytoskeleton. The protein resides in the cilium basal body. In terms of biological role, plays a role in motile cilium function, possibly by acting on outer dynein arm assembly. Seems to be important for initiation rather than maintenance of cilium motility. Required for correct positioning of the cilium at the apical cell surface, suggesting an additional role in the planar cell polarity (PCP) pathway. May suppress canonical Wnt signaling activity. The polypeptide is Cilia- and flagella-associated protein 298-B (cfap298-b) (Xenopus laevis (African clawed frog)).